The primary structure comprises 98 residues: Co-chaperonin GroES (98 aa).

This sequence belongs to the GroES chaperonin family. In terms of assembly, heptamer of 7 subunits arranged in a ring. Interacts with the chaperonin GroEL.

Its subcellular location is the cytoplasm. Functionally, together with the chaperonin GroEL, plays an essential role in assisting protein folding. The GroEL-GroES system forms a nano-cage that allows encapsulation of the non-native substrate proteins and provides a physical environment optimized to promote and accelerate protein folding. GroES binds to the apical surface of the GroEL ring, thereby capping the opening of the GroEL channel. This Bartonella tribocorum (strain CIP 105476 / IBS 506) protein is Co-chaperonin GroES.